Here is a 313-residue protein sequence, read N- to C-terminus: Solute carrier family 35 member E3 (313 aa).

A run of 9 helical transmembrane segments spans residues 17-37, 40-60, 77-97, 126-143, 153-173, 187-206, 225-245, 252-272, and 275-295; these read GLLF…WIYV, GFPN…GLYI, LLLL…SLQN, FSTR…GVIL, FLGM…QVWV, LLYY…VPFF, LMVL…YWII, TYNM…YVLF, and PLSI…LAYT.

The protein belongs to the TPT transporter family. SLC35E subfamily.

The protein resides in the membrane. Functionally, putative transporter. The polypeptide is Solute carrier family 35 member E3 (SLC35E3) (Homo sapiens (Human)).